The sequence spans 1992 residues: Fer-1-like protein 4 (1992 aa).

3 consecutive C2 domains span residues Met-1–Glu-97, Pro-214–Ala-330, and Thr-369–Asn-502. Over Met-1–Trp-1952 the chain is Extracellular. Disordered regions lie at residues Arg-554 to Ile-606, Ala-661 to Gln-686, and Ser-691 to Trp-710. Positions Pro-559–Ser-569 are enriched in polar residues. Positions Thr-572 to Lys-581 are enriched in basic residues. 2 C2 domains span residues Pro-951–Phe-1078 and Ile-1126–Glu-1250. Disordered stretches follow at residues Glu-1245–Thr-1276 and Phe-1322–Ser-1361. 2 stretches are compositionally biased toward acidic residues: residues Pro-1247 to Thr-1257 and Ser-1328 to Asp-1337. 2 consecutive C2 domains span residues Ser-1430 to Gly-1549 and Val-1675 to Ser-1824. Residues Asp-1464, Asp-1470, Asp-1519, Asp-1521, Asp-1527, Asp-1795, Ser-1798, and Asp-1801 each contribute to the Ca(2+) site. Positions Glu-1862 to Glu-1885 are disordered. A compositionally biased stretch (basic residues) spans Gly-1869 to Ala-1878. A helical transmembrane segment spans residues Arg-1953 to Leu-1973. Over Val-1974 to Lys-1992 the chain is Cytoplasmic.

Requires Ca(2+) as cofactor.

Its subcellular location is the membrane. This is Fer-1-like protein 4 (Fer1l4) from Mus musculus (Mouse).